The chain runs to 133 residues: ATP synthase epsilon chain (133 aa).

The tract at residues 103-133 (VSQMEGQEPSTEKIKAQQNFNRARARVQATK) is disordered.

It belongs to the ATPase epsilon chain family. As to quaternary structure, F-type ATPases have 2 components, CF(1) - the catalytic core - and CF(0) - the membrane proton channel. CF(1) has five subunits: alpha(3), beta(3), gamma(1), delta(1), epsilon(1). CF(0) has three main subunits: a, b and c.

The protein localises to the cellular thylakoid membrane. Its function is as follows. Produces ATP from ADP in the presence of a proton gradient across the membrane. This chain is ATP synthase epsilon chain, found in Prochlorococcus marinus (strain MIT 9313).